Reading from the N-terminus, the 151-residue chain is MDASKLKKVAGKKFGGPRKKSVTRSIKAGLQFPVGRIGRYLKKGRYAQRVGSGAPVYLAAVLEYLAAEVLELAGNAAKDNKKSRIVPRHLLLAVRNDQELGRLLAGVTIAHGGVIPNINPVLLPKKAAEKAEKAGTKAKSPKKATKSPKKA.

The residue at position 1 (Met1) is an N-acetylmethionine. The tract at residues 129 to 151 (EKAEKAGTKAKSPKKATKSPKKA) is disordered. Basic residues predominate over residues 139–151 (KSPKKATKSPKKA). Short sequence motifs (SPKK motif) lie at residues 140–143 (SPKK) and 147–150 (SPKK).

The protein belongs to the histone H2A family. As to quaternary structure, the nucleosome is a histone octamer containing two molecules each of H2A, H2B, H3 and H4 assembled in one H3-H4 heterotetramer and two H2A-H2B heterodimers. The octamer wraps approximately 147 bp of DNA. Phosphorylated within its C-terminal part, probably at the SPKK motifs.

It is found in the nucleus. Its subcellular location is the chromosome. Core component of nucleosome. Nucleosomes wrap and compact DNA into chromatin, limiting DNA accessibility to the cellular machineries which require DNA as a template. Histones thereby play a central role in transcription regulation, DNA repair, DNA replication and chromosomal stability. DNA accessibility is regulated via a complex set of post-translational modifications of histones, also called histone code, and nucleosome remodeling. The protein is Histone H2A.2.2 of Triticum aestivum (Wheat).